The chain runs to 61 residues: Small ribosomal subunit protein uS14 (61 aa).

4 residues coordinate Zn(2+): Cys24, Cys27, Cys40, and Cys43.

This sequence belongs to the universal ribosomal protein uS14 family. Zinc-binding uS14 subfamily. In terms of assembly, part of the 30S ribosomal subunit. Contacts proteins S3 and S10. Zn(2+) is required as a cofactor.

Its function is as follows. Binds 16S rRNA, required for the assembly of 30S particles and may also be responsible for determining the conformation of the 16S rRNA at the A site. The protein is Small ribosomal subunit protein uS14 of Streptococcus pyogenes serotype M49 (strain NZ131).